The chain runs to 281 residues: NH(3)-dependent NAD(+) synthetase (281 aa).

24–31 (GVSGGVDS) lines the ATP pocket. Mg(2+) is bound at residue aspartate 30. Residue arginine 145 coordinates deamido-NAD(+). Residue threonine 165 participates in ATP binding. Position 170 (glutamate 170) interacts with Mg(2+). 2 residues coordinate deamido-NAD(+): lysine 178 and aspartate 185. ATP is bound by residues lysine 194 and serine 216.

It belongs to the NAD synthetase family. In terms of assembly, homodimer.

The enzyme catalyses deamido-NAD(+) + NH4(+) + ATP = AMP + diphosphate + NAD(+) + H(+). It participates in cofactor biosynthesis; NAD(+) biosynthesis; NAD(+) from deamido-NAD(+) (ammonia route): step 1/1. Catalyzes the ATP-dependent amidation of deamido-NAD to form NAD. Uses ammonia as a nitrogen source. This is NH(3)-dependent NAD(+) synthetase (nadE1) from Thermotoga maritima (strain ATCC 43589 / DSM 3109 / JCM 10099 / NBRC 100826 / MSB8).